The primary structure comprises 258 residues: 6-carboxyhexanoate--CoA ligase (258 aa).

The protein belongs to the BioW family. Homodimer. Mg(2+) is required as a cofactor.

It carries out the reaction heptanedioate + ATP + CoA = 6-carboxyhexanoyl-CoA + AMP + diphosphate. Its pathway is metabolic intermediate metabolism; pimeloyl-CoA biosynthesis; pimeloyl-CoA from pimelate: step 1/1. Catalyzes the transformation of pimelate into pimeloyl-CoA with concomitant hydrolysis of ATP to AMP. This is 6-carboxyhexanoate--CoA ligase from Bacillus spizizenii (strain ATCC 23059 / NRRL B-14472 / W23) (Bacillus subtilis subsp. spizizenii).